A 298-amino-acid chain; its full sequence is Aspartate carbamoyltransferase catalytic subunit (298 aa).

Positions 54 and 55 each coordinate carbamoyl phosphate. An L-aspartate-binding site is contributed by K82. Carbamoyl phosphate-binding residues include R104, H132, and Q135. L-aspartate-binding residues include R165 and R218. 2 residues coordinate carbamoyl phosphate: G260 and P261.

Belongs to the aspartate/ornithine carbamoyltransferase superfamily. ATCase family. As to quaternary structure, heterododecamer (2C3:3R2) of six catalytic PyrB chains organized as two trimers (C3), and six regulatory PyrI chains organized as three dimers (R2).

The enzyme catalyses carbamoyl phosphate + L-aspartate = N-carbamoyl-L-aspartate + phosphate + H(+). Its pathway is pyrimidine metabolism; UMP biosynthesis via de novo pathway; (S)-dihydroorotate from bicarbonate: step 2/3. Functionally, catalyzes the condensation of carbamoyl phosphate and aspartate to form carbamoyl aspartate and inorganic phosphate, the committed step in the de novo pyrimidine nucleotide biosynthesis pathway. The chain is Aspartate carbamoyltransferase catalytic subunit from Wolbachia sp. subsp. Brugia malayi (strain TRS).